The following is a 208-amino-acid chain: Thymidylate kinase (208 aa).

7-14 (GIDGSGKS) lines the ATP pocket.

This sequence belongs to the thymidylate kinase family.

The catalysed reaction is dTMP + ATP = dTDP + ADP. Functionally, phosphorylation of dTMP to form dTDP in both de novo and salvage pathways of dTTP synthesis. The protein is Thymidylate kinase of Kosmotoga olearia (strain ATCC BAA-1733 / DSM 21960 / TBF 19.5.1).